The primary structure comprises 399 residues: Type II secretion system protein L (399 aa).

Topologically, residues 1-247 (MSKAENTSGK…VKPWKQALLP (247 aa)) are cytoplasmic. Residues 248–264 (WRNVLIALSAWLLLVLG) traverse the membrane as a helical segment. The Periplasmic portion of the chain corresponds to 265 to 399 (ESVWTHYQWY…EGQLTLRSQP (135 aa)).

Belongs to the GSP L family. In terms of assembly, type II secretion system is composed of four main components: the outer membrane complex, the inner membrane complex, the cytoplasmic secretion ATPase and the periplasm-spanning pseudopilus. Forms homodimers. Interacts with OutM/GspM. Interacts with OutE/GspE and OutF/GspF.

It localises to the cell inner membrane. Inner membrane component of the type II secretion system required for the energy-dependent secretion of extracellular factors such as proteases and toxins from the periplasm. Plays a role in the complex assembly and recruits OutM resulting in a stable complex in the inner membrane. Provides thus a link between the energy-providing OutE protein in the cytoplasm and the rest of the T2SS machinery. The polypeptide is Type II secretion system protein L (outL) (Dickeya chrysanthemi (Pectobacterium chrysanthemi)).